The chain runs to 283 residues: Para-Rep C7 (283 aa).

One can recognise a CRESS-DNA virus Rep endonuclease domain in the interval 3-96; it reads SIRATHWCFT…IAGPWEYGTW (94 aa). The short motif at 10–13 is the RCR-1 element; the sequence is CFTL. A divalent metal cation is bound by residues glutamate 36 and histidine 42. Positions 42 to 44 match the RCR-2 motif; sequence HLQ. The Nuclear localization signal signature appears at 51–71; that stretch reads KHVTLKKMKELLPGAHLEMAK. Tyrosine 79 acts as the For DNA cleavage activity in catalysis. The RCR-3 signature appears at 79 to 82; the sequence is YCQK. A divalent metal cation is bound at residue glutamate 84. Positions 96 to 102 match the Nuclear localization signal motif; it reads WISSGSH. 178–180 serves as a coordination point for ATP; sequence GKS.

Belongs to the nanoviridea/circoviridae replication-associated protein family. Homooligomer (Potential). Rep binds to repeated DNA motifs (iterons). Mg(2+) serves as cofactor. Requires Mn(2+) as cofactor.

It is found in the host nucleus. The enzyme catalyses ATP + H2O = ADP + phosphate + H(+). Its function is as follows. Initiates and terminates the replication only of its own subviral DNA molecule. The closed circular ssDNA genome is first converted to a superhelical dsDNA. Rep binds a specific hairpin at the genome origin of replication. Introduces an endonucleolytic nick within the intergenic region of the genome, thereby initiating the rolling circle replication (RCR). Following cleavage, binds covalently to the 5'-phosphate of DNA as a tyrosyl ester. The cleavage gives rise to a free 3'-OH that serves as a primer for the cellular DNA polymerase. The polymerase synthesizes the (+) strand DNA by rolling circle mechanism. After one round of replication, a Rep-catalyzed nucleotidyl transfer reaction releases a circular single-stranded virus genome, thereby terminating the replication. Displays origin-specific DNA cleavage, nucleotidyl transferase, ATPase and helicase activities. The protein is Para-Rep C7 (C7) of Faba bean necrotic yellows C7 alphasatellite (FBNYC7A).